The sequence spans 332 residues: NADH-quinone oxidoreductase subunit H (332 aa).

9 helical membrane-spanning segments follow: residues 4-24 (FAFF…IFAS), 44-64 (IGPD…MIKL), 78-98 (FIFA…LAAI), 120-140 (VALL…FLGG), 165-185 (VGAL…LVDI), 194-214 (FSWL…ALFI), 255-275 (IAGA…FWII), 279-299 (IMMI…RAAF), and 312-332 (YLIL…TVLL).

It belongs to the complex I subunit 1 family. In terms of assembly, NDH-1 is composed of 14 different subunits. Subunits NuoA, H, J, K, L, M, N constitute the membrane sector of the complex.

Its subcellular location is the cell inner membrane. The catalysed reaction is a quinone + NADH + 5 H(+)(in) = a quinol + NAD(+) + 4 H(+)(out). Its function is as follows. NDH-1 shuttles electrons from NADH, via FMN and iron-sulfur (Fe-S) centers, to quinones in the respiratory chain. The immediate electron acceptor for the enzyme in this species is believed to be ubiquinone. Couples the redox reaction to proton translocation (for every two electrons transferred, four hydrogen ions are translocated across the cytoplasmic membrane), and thus conserves the redox energy in a proton gradient. This subunit may bind ubiquinone. This is NADH-quinone oxidoreductase subunit H from Campylobacter jejuni subsp. jejuni serotype O:2 (strain ATCC 700819 / NCTC 11168).